The primary structure comprises 207 residues: Large ribosomal subunit protein uL4 (207 aa).

Positions 49–79 (HKVKSRGEVSGGGKKPWRQKGTGRARAGTSR) are disordered.

Belongs to the universal ribosomal protein uL4 family. Part of the 50S ribosomal subunit.

One of the primary rRNA binding proteins, this protein initially binds near the 5'-end of the 23S rRNA. It is important during the early stages of 50S assembly. It makes multiple contacts with different domains of the 23S rRNA in the assembled 50S subunit and ribosome. Its function is as follows. Forms part of the polypeptide exit tunnel. The sequence is that of Large ribosomal subunit protein uL4 from Heliobacterium modesticaldum (strain ATCC 51547 / Ice1).